The chain runs to 161 residues: Thy-1 membrane glycoprotein (161 aa).

Residues 1-19 (MNLAISIALLLTVLQVSRG) form the signal peptide. At Gln20 the chain carries Pyrrolidone carboxylic acid. The Ig-like V-type domain occupies 20 to 126 (QKVTSLTACL…SQNVTVLRDK (107 aa)). 2 disulfides stabilise this stretch: Cys28-Cys130 and Cys38-Cys104. 2 N-linked (GlcNAc...) asparagine glycosylation sites follow: Asn42 and Asn79. Phosphoserine is present on Ser82. A glycan (N-linked (GlcNAc...) asparagine) is linked at Asn119. The GPI-anchor amidated cysteine; alternate moiety is linked to residue Cys130. Residues 131–161 (EGISLLAQNTSWLXLLLLSLSLLQATDFMSL) constitute a propeptide, removed in mature form. Asn139 carries N-linked (GlcNAc...) asparagine glycosylation.

Its subcellular location is the cell membrane. Functionally, may play a role in cell-cell or cell-ligand interactions during synaptogenesis and other events in the brain. This is Thy-1 membrane glycoprotein (THY1) from Macaca mulatta (Rhesus macaque).